The chain runs to 1015 residues: MNSDINMYLGREKAGIMRKRALLLRKGCSFEITSSASEDLGCRRGEFSRKHYGSVELLISSDADGAIQRAGRFRVENGSIDEISDYTPGTWRRTDVHLENPEYHTRWYFKYFLGKVHQNYVGTDAEKNPFFLSVVLSDQNNQRVPQYRAILWRKTGTLKISLPYSPTKTLSVKSILSAMNVDRFEKGPREILNPEIQKDLLVLEEQEGSVNFKFGVLYAKDGQLTDDEMFSNEMGSETFEKFLNLLGDTICLQGWAGYRGGLDTKNDTTGINSIYTVYQGHELMFHVSTMLPYSKENKQQVERKRHIGNDIVTIVFQEGDDASPSFKPSMIRSHFTHIFALVRYNSQNDSYRLKIFSEESVPLFGPPLPSPPVFTDHQEFRDFLLVKLINGEKATLETPTFAQKRQRTLDMLIRSLYQDLMPDMHKNMLNRRSFSDVLPESPKSARKKEEARQAEFVRVGQALKLKTIVRGDAPTSLVTTGLCRKEPWESQSFCSSFPYDIVCGDSWGQSLLVATDSAGVMLLEDSPTLPPVQVFDKTLTVKQMHVLEPQDLLIARADKGKDARLYVYRLSTLKQGIEERQLVRTKCDSRENKLEKTKGCHLYSINTHHGVELRIVAAIRNKLLLITRKQSRLECVSSIATVTGSTDSPVEEFQYIREICLCDSPVVMALVDGPTGENDHMICVAYRHQFDLINESTGDAYRLHHVDSNRVNFVAAIDVYEDGEAGLLLCYNNICVYKKVCPFNGATPMIQPNTSDFHFSWNQMPNATVCAFPYILAFTTDSIEIRLVVNGNLVYTAVVPELQLTASRSDIYFISSAPINSASNCSSRDTSSQSSPQTPTGYEMPVFPSPLGDGETQSKHIYKIPLSNLVGRSIERPLKSPLVNKVLTAPAPSMTGPAPMIGSTTSLSLSRMEIKEIASRTRKELLGLTEEPSSKADGNSVKQRRMSKKNKEEEQKRTAEISIAEQVGMESVDGETDIQQLCPSGSEVEVRDDSPPTANPFTFSTSFEDDILDLK.

The 217-residue stretch at 200–416 (LLVLEEQEGS…RTLDMLIRSL (217 aa)) folds into the Rap-GAP domain. Residues 498 to 812 (PYDIVCGDSW…QLTASRSDIY (315 aa)) form the CNH domain. Disordered regions lie at residues 821–842 (SASNCSSRDTSSQSSPQTPTGY) and 924–1004 (ELLG…FTFS). Over residues 823-835 (SNCSSRDTSSQSS) the composition is skewed to low complexity. A compositionally biased stretch (basic and acidic residues) spans 949-959 (KNKEEEQKRTA).

Belongs to the GARNL3 family.

The polypeptide is GTPase-activating Rap/Ran-GAP domain-like protein 3 (garnl3) (Danio rerio (Zebrafish)).